The sequence spans 120 residues: Large ribosomal subunit protein uL18 (120 aa).

Residues 1–10 (MKLNRVESTR) show a composition bias toward basic and acidic residues. The tract at residues 1–26 (MKLNRVESTRSRHRRVRRKVGGTGDR) is disordered. Residues 11–20 (SRHRRVRRKV) are compositionally biased toward basic residues.

This sequence belongs to the universal ribosomal protein uL18 family. Part of the 50S ribosomal subunit; part of the 5S rRNA/L5/L18/L25 subcomplex. Contacts the 5S and 23S rRNAs.

This is one of the proteins that bind and probably mediate the attachment of the 5S RNA into the large ribosomal subunit, where it forms part of the central protuberance. This is Large ribosomal subunit protein uL18 from Cyanothece sp. (strain PCC 7425 / ATCC 29141).